A 115-amino-acid polypeptide reads, in one-letter code: Macroconotoxin Mu8.1 (115 aa).

Residues 1–21 form the signal peptide; the sequence is MDMKMTFSGLVLVVLVTTVVG. A propeptide spanning residues 22–26 is cleaved from the precursor; the sequence is SSVRR. 5 disulfides stabilise this stretch: cysteine 36-cysteine 77, cysteine 44-cysteine 60, cysteine 48-cysteine 56, cysteine 83-cysteine 115, and cysteine 87-cysteine 97. Residue glutamate 40 coordinates Zn(2+). A Zn(2+)-binding site is contributed by histidine 68.

Mostly found as a homodimer in solution; non-covalently bound. As to expression, expressed by the venom duct.

Its subcellular location is the secreted. Modestly and reversibly inhibits Cav2.3/CACNA1E (IC(50)=5.8 uM) recombinantly expressed in HEK293 cells without affecting the voltage dependence of activation. In mouse DRG sensory neurons, modulates depolarization-induced calcium influx. In Conus mucronatus (Pointed cone), this protein is Macroconotoxin Mu8.1.